An 841-amino-acid chain; its full sequence is MNPNSKHNTNFTNLLKPSDSDIKQFAAQHIRHLTDLLNRYAYEYYTLDAPSVPDAEYDKLFRELEALELNHPELKLPDSPTQRVGGEPLAGFAEVRHEVPMLSLTNAFSPQDENGVFDHAEMYAFDQRVRDGLDGGKPEYVIEPKFDGLAISLLYRDGVLVQAATRGDGTTGEDVTQNIKTVSNIPLRLHGENTPELIEVRGEVLMLKADFVALNKRQAENGQKPFANPRNAAAGSLRQLDSRITAQRKLHFFPYSVARQQDGFVAEEHIQELAYFQALGFSLPNGNFGCFKNIDEVLAFYEHMQQKRPELPYEIDGMVVKVNSLAQQHELGFISRAPRWAVAHKFPAEEALTIVEAIDVQIGRTGAVTPVARLQPVFVGGVTVTNATLHNQDEVSRKDVRVGDTVVVRRAGDVIPEVVRVIFERRPMRETAVAVSDGIGHRQDDLFAETPSANQTQSVPLHKPYRLPTHCPICRSEIEREEGEAVARCSGGMLCQAQRAQGLIHFASRKAMDIDGLGEKQIEQLVAQDLVRHFADLYRLDIPTLQKMKETADKTVAESDQMPSEGSSVGASGKHKKQPVKWAENILAGIEASKTPELARFLFALGIRHVGERTAKTLAQAFGTLERVRRAPEPVLACLPDIGTVVARSIAHFFAQAEQQAMIDELLAAGVAPQTQAVTIPPARHAEPQRWIARLPGFKISENKAQALWELAGKNIEGLQTDKALPTDWQAWRSEPQNAALLENLKTFFAQMPSEDEAAQGSDGINKAVAGKTFVLTGTLPTLKRDQAQSLIEAAGGKVSGSVSKKTDYVVAGEAAGSKLEKANALGVSVLSEAELLTLLG.

NAD(+)-binding positions include 54–58 (DAEYD), 103–104 (SL), and Glu143. The active-site N6-AMP-lysine intermediate is Lys145. The NAD(+) site is built by Arg166, Glu203, Lys321, and Lys345. Zn(2+) contacts are provided by Cys471, Cys474, Cys489, and Cys495. The segment at 554–575 (KTVAESDQMPSEGSSVGASGKH) is disordered. Over residues 561 to 570 (QMPSEGSSVG) the composition is skewed to polar residues. The BRCT domain occupies 764–841 (GINKAVAGKT…SEAELLTLLG (78 aa)).

The protein belongs to the NAD-dependent DNA ligase family. LigA subfamily. Requires Mg(2+) as cofactor. The cofactor is Mn(2+).

It carries out the reaction NAD(+) + (deoxyribonucleotide)n-3'-hydroxyl + 5'-phospho-(deoxyribonucleotide)m = (deoxyribonucleotide)n+m + AMP + beta-nicotinamide D-nucleotide.. Functionally, DNA ligase that catalyzes the formation of phosphodiester linkages between 5'-phosphoryl and 3'-hydroxyl groups in double-stranded DNA using NAD as a coenzyme and as the energy source for the reaction. It is essential for DNA replication and repair of damaged DNA. In Neisseria meningitidis serogroup C / serotype 2a (strain ATCC 700532 / DSM 15464 / FAM18), this protein is DNA ligase.